Here is a 359-residue protein sequence, read N- to C-terminus: 3-dehydroquinate synthase (359 aa).

Residues 71-76, 105-109, 129-130, K142, K151, and 169-172 contribute to the NAD(+) site; these read DGEQYK, GVIGD, TT, and CLKT. The Zn(2+) site is built by E184, H247, and H264.

The protein belongs to the sugar phosphate cyclases superfamily. Dehydroquinate synthase family. Co(2+) serves as cofactor. It depends on Zn(2+) as a cofactor. Requires NAD(+) as cofactor.

It localises to the cytoplasm. It carries out the reaction 7-phospho-2-dehydro-3-deoxy-D-arabino-heptonate = 3-dehydroquinate + phosphate. It functions in the pathway metabolic intermediate biosynthesis; chorismate biosynthesis; chorismate from D-erythrose 4-phosphate and phosphoenolpyruvate: step 2/7. Catalyzes the conversion of 3-deoxy-D-arabino-heptulosonate 7-phosphate (DAHP) to dehydroquinate (DHQ). This is 3-dehydroquinate synthase from Shewanella amazonensis (strain ATCC BAA-1098 / SB2B).